A 473-amino-acid polypeptide reads, in one-letter code: Cysteine--tRNA ligase (473 aa).

Residue C33 coordinates Zn(2+). The 'HIGH' region motif lies at 35–45 (ATVQGQPHIGH). Positions 211, 236, and 240 each coordinate Zn(2+). Positions 267 to 271 (KMSKS) match the 'KMSKS' region motif. Residue K270 coordinates ATP.

Belongs to the class-I aminoacyl-tRNA synthetase family. As to quaternary structure, monomer. Zn(2+) is required as a cofactor.

It localises to the cytoplasm. The catalysed reaction is tRNA(Cys) + L-cysteine + ATP = L-cysteinyl-tRNA(Cys) + AMP + diphosphate. This is Cysteine--tRNA ligase from Mycobacterium leprae (strain Br4923).